The sequence spans 399 residues: 4-hydroxy-3-methylbut-2-enyl diphosphate reductase (399 aa).

Residue cysteine 66 participates in [4Fe-4S] cluster binding. Histidine 96 is a binding site for (2E)-4-hydroxy-3-methylbut-2-enyl diphosphate. Histidine 96 contributes to the dimethylallyl diphosphate binding site. Histidine 96 lines the isopentenyl diphosphate pocket. Cysteine 157 is a binding site for [4Fe-4S] cluster. Residue histidine 185 coordinates (2E)-4-hydroxy-3-methylbut-2-enyl diphosphate. Histidine 185 serves as a coordination point for dimethylallyl diphosphate. Histidine 185 is an isopentenyl diphosphate binding site. The active-site Proton donor is glutamate 187. (2E)-4-hydroxy-3-methylbut-2-enyl diphosphate is bound at residue threonine 250. A [4Fe-4S] cluster-binding site is contributed by cysteine 288. Residues serine 317, serine 318, asparagine 319, and serine 380 each contribute to the (2E)-4-hydroxy-3-methylbut-2-enyl diphosphate site. Residues serine 317, serine 318, asparagine 319, and serine 380 each coordinate dimethylallyl diphosphate. Isopentenyl diphosphate contacts are provided by serine 317, serine 318, asparagine 319, and serine 380.

It belongs to the IspH family. [4Fe-4S] cluster serves as cofactor.

The enzyme catalyses isopentenyl diphosphate + 2 oxidized [2Fe-2S]-[ferredoxin] + H2O = (2E)-4-hydroxy-3-methylbut-2-enyl diphosphate + 2 reduced [2Fe-2S]-[ferredoxin] + 2 H(+). It catalyses the reaction dimethylallyl diphosphate + 2 oxidized [2Fe-2S]-[ferredoxin] + H2O = (2E)-4-hydroxy-3-methylbut-2-enyl diphosphate + 2 reduced [2Fe-2S]-[ferredoxin] + 2 H(+). Its pathway is isoprenoid biosynthesis; dimethylallyl diphosphate biosynthesis; dimethylallyl diphosphate from (2E)-4-hydroxy-3-methylbutenyl diphosphate: step 1/1. It functions in the pathway isoprenoid biosynthesis; isopentenyl diphosphate biosynthesis via DXP pathway; isopentenyl diphosphate from 1-deoxy-D-xylulose 5-phosphate: step 6/6. Catalyzes the conversion of 1-hydroxy-2-methyl-2-(E)-butenyl 4-diphosphate (HMBPP) into a mixture of isopentenyl diphosphate (IPP) and dimethylallyl diphosphate (DMAPP). Acts in the terminal step of the DOXP/MEP pathway for isoprenoid precursor biosynthesis. This chain is 4-hydroxy-3-methylbut-2-enyl diphosphate reductase, found in Parasynechococcus marenigrum (strain WH8102).